Here is a 757-residue protein sequence, read N- to C-terminus: Inhibitor of nuclear factor kappa-B kinase subunit beta (757 aa).

Positions 15 to 300 (WEMKERLGTG…DPQYGPNGCF (286 aa)) constitute a Protein kinase domain. Residues 21 to 29 (LGTGGFGNV) and Lys-44 contribute to the ATP site. Residue Asp-145 is the Proton acceptor of the active site. Lys-163 participates in a covalent cross-link: Glycyl lysine isopeptide (Lys-Gly) (interchain with G-Cter in ubiquitin). Ser-177 carries the post-translational modification Phosphoserine; by TBK1 and PKC/PRKCZ. An S-nitrosocysteine modification is found at Cys-179. Residue Ser-181 is modified to Phosphoserine; by TBK1, PKC/PRKCZ and PDPK1. The residue at position 191 (Pro-191) is a Hydroxyproline. Residues 458-479 (LLRNNSCLSKMKNAMASTAQQL) are leucine-zipper. Ser-670 is modified (phosphoserine; by autocatalysis). Ser-672 is subject to Phosphoserine. Phosphoserine; by autocatalysis is present on residues Ser-675, Ser-682, Ser-689, Ser-692, Ser-697, Ser-705, Ser-733, and Ser-740. A disordered region spans residues 682 to 703 (SHPGHLMSQPSSACDSLPDSDK). Residues 737–742 (LDWSWL) form an NEMO-binding region.

This sequence belongs to the protein kinase superfamily. Ser/Thr protein kinase family. I-kappa-B kinase subfamily. As to quaternary structure, component of the I-kappa-B-kinase (IKK) core complex consisting of CHUK, IKBKB and IKBKG; probably four alpha/CHUK-beta/IKBKB dimers are associated with four gamma/IKBKG subunits. The IKK core complex seems to associate with regulatory or adapter proteins to form a IKK-signalosome holo-complex. The IKK complex associates with TERF2IP/RAP1, leading to promote IKK-mediated phosphorylation of RELA/p65. Part of a complex composed of NCOA2, NCOA3, CHUK/IKKA, IKBKB, IKBKG and CREBBP. Part of a 70-90 kDa complex at least consisting of CHUK/IKKA, IKBKB, NFKBIA, RELA, ELP1 and MAP3K14. Found in a membrane raft complex, at least composed of BCL10, CARD11, DPP4 and IKBKB. Interacts with SQSTM1 through PRKCZ or PRKCI. Forms an NGF-induced complex with IKBKB, PRKCI and TRAF6. May interact with MAVS/IPS1. Interacts with NALP2. Interacts with TICAM1. Interacts with FAF1; the interaction disrupts the IKK complex formation. Interacts with ATM. Part of a ternary complex consisting of TANK, IKBKB and IKBKG. Interacts with NIBP; the interaction is direct. Interacts with ARRB1 and ARRB2. Interacts with TRIM21. Interacts with NLRC5; prevents IKBKB phosphorylation and kinase activity. Interacts with PDPK1. Interacts with EIF2AK2/PKR. The phosphorylated form interacts with PPM1A and PPM1B. Interacts with ZNF268 isoform 2; the interaction is further increased in a TNF-alpha-dependent manner. Interacts with IKBKE. Interacts with ZC3H12A. Interacts with AKAP13. Interacts with LRRC14; disrupts IKBKB-IKBKG interaction preventing I-kappa-B-kinase (IKK) core complex formation and leading to a decrease of IKBKB phosphorylation and NF-kappaB activation. Interacts with SASH1. Interacts with ARFIP2. Interacts with FKBP5. Upon cytokine stimulation, phosphorylated on Ser-177 and Ser-181 by MEKK1 and/or MAP3K14/NIK as well as TBK1 and PRKCZ; which enhances activity. Phosphorylated by MAP3K7/TAK1 in response to NOD1 and NOD2 signaling, promoting activation and phosphorylation of NF-kappa-B inhibitors, leading to NF-kappa-B activation. Once activated, autophosphorylates on the C-terminal serine cluster; which decreases activity and prevents prolonged activation of the inflammatory response. Phosphorylated by the IKK-related kinases TBK1 and IKBKE, which is associated with reduced CHUK/IKKA and IKBKB activity and NF-kappa-B-dependent gene transcription. Dephosphorylated at Ser-177 and Ser-181 by PPM1A and PPM1B. In terms of processing, ubiquitinated. Monoubiquitination involves TRIM21 that leads to inhibition of Tax-induced NF-kappa-B signaling. 'Ser-163' may not serve as a monoubiquitination site. Ubiquitination on 'Ser-163' may modulate phosphorylation on C-terminal serine residues. Post-translationally, hydroxylated by PHD1/EGLN2, loss of hydroxylation under hypoxic conditions results in activation of NF-kappa-B.

The protein localises to the cytoplasm. It is found in the nucleus. It localises to the membrane raft. The enzyme catalyses L-seryl-[I-kappa-B protein] + ATP = O-phospho-L-seryl-[I-kappa-B protein] + ADP + H(+). It catalyses the reaction L-seryl-[protein] + ATP = O-phospho-L-seryl-[protein] + ADP + H(+). The catalysed reaction is L-threonyl-[protein] + ATP = O-phospho-L-threonyl-[protein] + ADP + H(+). In terms of biological role, serine kinase that plays an essential role in the NF-kappa-B signaling pathway which is activated by multiple stimuli such as inflammatory cytokines, bacterial or viral products, DNA damages or other cellular stresses. Acts as a part of the canonical IKK complex in the conventional pathway of NF-kappa-B activation. Phosphorylates inhibitors of NF-kappa-B on 2 critical serine residues. These modifications allow polyubiquitination of the inhibitors and subsequent degradation by the proteasome. In turn, free NF-kappa-B is translocated into the nucleus and activates the transcription of hundreds of genes involved in immune response, growth control, or protection against apoptosis. In addition to the NF-kappa-B inhibitors, phosphorylates several other components of the signaling pathway including NEMO/IKBKG, NF-kappa-B subunits RELA and NFKB1, as well as IKK-related kinases TBK1 and IKBKE. IKK-related kinase phosphorylations may prevent the overproduction of inflammatory mediators since they exert a negative regulation on canonical IKKs. Phosphorylates FOXO3, mediating the TNF-dependent inactivation of this pro-apoptotic transcription factor. Also phosphorylates other substrates including NAA10, NCOA3, BCL10 and IRS1. Phosphorylates RIPK1 at 'Ser-25' which represses its kinase activity and consequently prevents TNF-mediated RIPK1-dependent cell death. Phosphorylates the C-terminus of IRF5, stimulating IRF5 homodimerization and translocation into the nucleus. The polypeptide is Inhibitor of nuclear factor kappa-B kinase subunit beta (Ikbkb) (Rattus norvegicus (Rat)).